The chain runs to 461 residues: Glutamate--tRNA ligase (461 aa).

Residues 8-18 (PSPTGYLHIGG) carry the 'HIGH' region motif. Residues 240-244 (KMSKR) carry the 'KMSKS' region motif. Residue K243 participates in ATP binding.

It belongs to the class-I aminoacyl-tRNA synthetase family. Glutamate--tRNA ligase type 1 subfamily. As to quaternary structure, monomer.

The protein resides in the cytoplasm. The enzyme catalyses tRNA(Glu) + L-glutamate + ATP = L-glutamyl-tRNA(Glu) + AMP + diphosphate. In terms of biological role, catalyzes the attachment of glutamate to tRNA(Glu) in a two-step reaction: glutamate is first activated by ATP to form Glu-AMP and then transferred to the acceptor end of tRNA(Glu). This is Glutamate--tRNA ligase from Chromobacterium violaceum (strain ATCC 12472 / DSM 30191 / JCM 1249 / CCUG 213 / NBRC 12614 / NCIMB 9131 / NCTC 9757 / MK).